An 840-amino-acid chain; its full sequence is MWSGIPVFALLSSIGIAAAENGLDGWLRYASVPCNGNCQRALPSHIVTLNSTKSSQVYVAGQELQDGLHQILGKHASVKSTGCSTDSSIVVGTVEAYRQVCNTGSQAPELDVDGFWLSIRGKSVQIVGQTERGALYGAYEYLSMLAQGNFSQVSYATSPHAPIRWVNQWDNMDGSIERGYGGPSIFFKDGVIPQDLSRVKQYARLLASVRINGIVVNNVNANASLLMPSNMDGLARIADVFRPYGIRVGISLNFASPSTLGNLSTYDPFDSSVIAWWGNVTDQLYARIPDMAGYLVKANSEGQPGPTTYNRTLADGANMFARALKPHGGVVMFRAFVYDHHISEDNWYNDRANAAVDFFKPLDGKFDDNVVVQIKYGPIDFQVREPASPLFANLYKTNTAIELQVTQEYLGQQSHLVYLPPLWQTILRFDLRVDQKPSPVRDIISGQRFDRPLGGWAAVVNVGTNTTWLGSHLAMSNLYAYGRLAWEPTLDSEDIVQDWIRLTFGLDRRVLDTLTQMSMESWPAYENYSGNLGIQTLTDILYTHYGPNPASQDGNGWGQWTRADHLSIGMDRTVKNGTKFSGQYPAEVAAMYENIETTPDNLMLWFHHVNYTQRLHSGKTVIQHFYDAHYDGAETAQTFVSRWESLRERIDAERYQHVLARLIYQAGHSIVWRDAINNFYRNLSGIADEKERVGYHPWRVEAEDMQLDGYVPYAVSPFETASNFTAIVTASNGTTGTASATLDFKTGTYDLGINYYDMYGGKSHWTVYLNDRVVGQWQGNSEDVLSHTPSIYLDGHSATRITFRDVKIHKGDRLKIVGEPDGVEPAPLDYAVVLPRGIVD.

The first 19 residues, M1 to A19, serve as a signal peptide directing secretion. N-linked (GlcNAc...) asparagine glycans are attached at residues N50, N149, N222, N262, N279, N310, N465, N527, N576, N610, N682, N723, and N732.

It belongs to the glycosyl hydrolase 67 family.

It is found in the secreted. The enzyme catalyses an alpha-D-glucuronoside + H2O = D-glucuronate + an alcohol. In terms of biological role, alpha-glucuronidase involved in the hydrolysis of xylan, a major structural heterogeneous polysaccharide found in plant biomass representing the second most abundant polysaccharide in the biosphere, after cellulose. Releases 4-O-methylglucuronic acid from xylan. This Neosartorya fischeri (strain ATCC 1020 / DSM 3700 / CBS 544.65 / FGSC A1164 / JCM 1740 / NRRL 181 / WB 181) (Aspergillus fischerianus) protein is Probable alpha-glucuronidase A (aguA).